A 345-amino-acid chain; its full sequence is S-adenosylmethionine:tRNA ribosyltransferase-isomerase (345 aa).

This sequence belongs to the QueA family. As to quaternary structure, monomer.

The protein resides in the cytoplasm. The catalysed reaction is 7-aminomethyl-7-carbaguanosine(34) in tRNA + S-adenosyl-L-methionine = epoxyqueuosine(34) in tRNA + adenine + L-methionine + 2 H(+). The protein operates within tRNA modification; tRNA-queuosine biosynthesis. Transfers and isomerizes the ribose moiety from AdoMet to the 7-aminomethyl group of 7-deazaguanine (preQ1-tRNA) to give epoxyqueuosine (oQ-tRNA). The sequence is that of S-adenosylmethionine:tRNA ribosyltransferase-isomerase from Shewanella baltica (strain OS155 / ATCC BAA-1091).